Consider the following 231-residue polypeptide: Large ribosomal subunit protein uL1 (231 aa).

Belongs to the universal ribosomal protein uL1 family. As to quaternary structure, part of the 50S ribosomal subunit.

Binds directly to 23S rRNA. The L1 stalk is quite mobile in the ribosome, and is involved in E site tRNA release. Functionally, protein L1 is also a translational repressor protein, it controls the translation of the L11 operon by binding to its mRNA. In Teredinibacter turnerae (strain ATCC 39867 / T7901), this protein is Large ribosomal subunit protein uL1.